The following is a 763-amino-acid chain: 5-methyltetrahydropteroyltriglutamate--homocysteine methyltransferase (763 aa).

5-methyltetrahydropteroyltri-L-glutamate contacts are provided by residues 16–19 (RELK) and K117. L-homocysteine-binding positions include 438 to 440 (IGS) and E491. Residues 438-440 (IGS) and E491 each bind L-methionine. 5-methyltetrahydropteroyltri-L-glutamate-binding positions include 522-523 (RC) and W568. An L-homocysteine-binding site is contributed by D606. D606 contacts L-methionine. E612 contacts 5-methyltetrahydropteroyltri-L-glutamate. Positions 648, 650, and 672 each coordinate Zn(2+). H701 functions as the Proton donor in the catalytic mechanism. C733 is a Zn(2+) binding site.

The protein belongs to the vitamin-B12 independent methionine synthase family. Requires Zn(2+) as cofactor.

It catalyses the reaction 5-methyltetrahydropteroyltri-L-glutamate + L-homocysteine = tetrahydropteroyltri-L-glutamate + L-methionine. Its pathway is amino-acid biosynthesis; L-methionine biosynthesis via de novo pathway; L-methionine from L-homocysteine (MetE route): step 1/1. Functionally, catalyzes the transfer of a methyl group from 5-methyltetrahydrofolate to homocysteine resulting in methionine formation. This chain is 5-methyltetrahydropteroyltriglutamate--homocysteine methyltransferase, found in Pseudomonas paraeruginosa (strain DSM 24068 / PA7) (Pseudomonas aeruginosa (strain PA7)).